The primary structure comprises 343 residues: WAT1-related protein At1g43650 (343 aa).

A run of 10 helical transmembrane segments spans residues 9–29, 36–56, 65–85, 98–118, 130–150, 175–195, 209–229, 239–259, 272–292, and 296–316; these read MAMV…KVAI, FVFV…FAFF, LSFI…TLSL, TFAA…ALLF, GVAK…FAFV, SVKG…WIIM, LVAL…VAVN, FGLP…LTYW, FTAL…SFLF, and FYLG…LGLW. EamA domains follow at residues 16–139 and 188–313; these read IVYA…GSMV and CWCL…GLYL.

Belongs to the drug/metabolite transporter (DMT) superfamily. Plant drug/metabolite exporter (P-DME) (TC 2.A.7.4) family.

The protein resides in the membrane. The sequence is that of WAT1-related protein At1g43650 from Arabidopsis thaliana (Mouse-ear cress).